Here is a 213-residue protein sequence, read N- to C-terminus: 3-demethoxyubiquinol 3-hydroxylase (213 aa).

The Fe cation site is built by E62, E92, H95, E144, E176, and H179.

The protein belongs to the COQ7 family. It depends on Fe cation as a cofactor.

It is found in the cell membrane. The catalysed reaction is a 5-methoxy-2-methyl-3-(all-trans-polyprenyl)benzene-1,4-diol + AH2 + O2 = a 3-demethylubiquinol + A + H2O. The protein operates within cofactor biosynthesis; ubiquinone biosynthesis. In terms of biological role, catalyzes the hydroxylation of 2-nonaprenyl-3-methyl-6-methoxy-1,4-benzoquinol during ubiquinone biosynthesis. The polypeptide is 3-demethoxyubiquinol 3-hydroxylase (Chromohalobacter salexigens (strain ATCC BAA-138 / DSM 3043 / CIP 106854 / NCIMB 13768 / 1H11)).